The chain runs to 237 residues: Ribonuclease 3 (237 aa).

One can recognise an RNase III domain in the interval 7–135 (IKEVEAKLKF…ILGAVYLDGG (129 aa)). Glutamate 48 is a binding site for Mg(2+). The active site involves aspartate 52. The Mg(2+) site is built by asparagine 121 and glutamate 124. Glutamate 124 is a catalytic residue. In terms of domain architecture, DRBM spans 160–229 (NPKNRLQQLT…AQEALDANDY (70 aa)).

The protein belongs to the ribonuclease III family. In terms of assembly, homodimer. It depends on Mg(2+) as a cofactor.

The protein resides in the cytoplasm. It catalyses the reaction Endonucleolytic cleavage to 5'-phosphomonoester.. Its function is as follows. Digests double-stranded RNA. Involved in the processing of primary rRNA transcript to yield the immediate precursors to the large and small rRNAs (23S and 16S). Processes some mRNAs, and tRNAs when they are encoded in the rRNA operon. Processes pre-crRNA and tracrRNA of type II CRISPR loci if present in the organism. In Chlamydia felis (strain Fe/C-56) (Chlamydophila felis), this protein is Ribonuclease 3.